The sequence spans 396 residues: Na(+)/H(+) antiporter NhaA 2 (396 aa).

11 helical membrane passes run Leu-17–Phe-37, Leu-62–Ile-82, Ser-98–Leu-118, Gly-125–Gly-145, Leu-154–Phe-174, Leu-179–Tyr-199, Ile-209–Ala-229, Phe-268–Phe-288, Leu-296–Phe-316, Ile-337–Leu-357, and Val-368–Ile-388.

It belongs to the NhaA Na(+)/H(+) (TC 2.A.33) antiporter family.

The protein localises to the cell inner membrane. It catalyses the reaction Na(+)(in) + 2 H(+)(out) = Na(+)(out) + 2 H(+)(in). Na(+)/H(+) antiporter that extrudes sodium in exchange for external protons. The protein is Na(+)/H(+) antiporter NhaA 2 of Aliarcobacter butzleri (strain RM4018) (Arcobacter butzleri).